The chain runs to 63 residues: ATP synthase F(0) complex subunit 8 (63 aa).

Residues 8–24 (TWFLTILSVMLTLFTLL) form a helical membrane-spanning segment. Residue Lys57 is modified to N6-acetyllysine.

It belongs to the ATPase protein 8 family. As to quaternary structure, component of the ATP synthase complex composed at least of ATP5F1A/subunit alpha, ATP5F1B/subunit beta, ATP5MC1/subunit c (homooctomer), MT-ATP6/subunit a, MT-ATP8/subunit 8, ATP5ME/subunit e, ATP5MF/subunit f, ATP5MG/subunit g, ATP5MK/subunit k, ATP5MJ/subunit j, ATP5F1C/subunit gamma, ATP5F1D/subunit delta, ATP5F1E/subunit epsilon, ATP5PF/subunit F6, ATP5PB/subunit b, ATP5PD/subunit d, ATP5PO/subunit OSCP. ATP synthase complex consists of a soluble F(1) head domain (subunits alpha(3) and beta(3)) - the catalytic core - and a membrane F(0) domain - the membrane proton channel (subunits c, a, 8, e, f, g, k and j). These two domains are linked by a central stalk (subunits gamma, delta, and epsilon) rotating inside the F1 region and a stationary peripheral stalk (subunits F6, b, d, and OSCP). Interacts with PRICKLE3.

The protein localises to the mitochondrion membrane. Its function is as follows. Subunit 8, of the mitochondrial membrane ATP synthase complex (F(1)F(0) ATP synthase or Complex V) that produces ATP from ADP in the presence of a proton gradient across the membrane which is generated by electron transport complexes of the respiratory chain. ATP synthase complex consist of a soluble F(1) head domain - the catalytic core - and a membrane F(1) domain - the membrane proton channel. These two domains are linked by a central stalk rotating inside the F(1) region and a stationary peripheral stalk. During catalysis, ATP synthesis in the catalytic domain of F(1) is coupled via a rotary mechanism of the central stalk subunits to proton translocation. In vivo, can only synthesize ATP although its ATP hydrolase activity can be activated artificially in vitro. Part of the complex F(0) domain. This chain is ATP synthase F(0) complex subunit 8, found in Physeter macrocephalus (Sperm whale).